An 814-amino-acid polypeptide reads, in one-letter code: Spore development regulator umv1 (814 aa).

Disordered stretches follow at residues 1-36 (MSRP…GSTE), 96-134 (HDRP…VRRG), 267-333 (QGLK…MPRS), 407-441 (PPRD…RAGP), 457-501 (PVRS…ASLT), and 539-814 (QSSG…NQPY). Residues 7 to 18 (RSGNASTPQGTS) show a composition bias toward polar residues. The Velvet domain occupies 53 to 274 (RDHIEYQLTV…AEQGLKVRVR (222 aa)). A compositionally biased stretch (basic residues) spans 271-285 (VRVRKHPRSRRRGSK). Basic and acidic residues predominate over residues 407-423 (PPRDFADGRYMDGDYPP). A Nuclear localization signal motif is present at residues 438–445 (RAGPSEYS). Low complexity predominate over residues 620–631 (AAARRSPIPSAR). Basic and acidic residues-rich tracts occupy residues 723–741 (TRDR…DRDQ) and 760–796 (GELD…RRDF). A compositionally biased stretch (polar residues) spans 800-814 (TMPSKPSSRGHNQPY).

It belongs to the velvet family. VosA subfamily. Forms a heterodimeric complex with velB; the formation of the VEL2-VOS1 complex is light-dependent.

Its subcellular location is the nucleus. Its function is as follows. Component of the velB-VosA heterodimeric complex that plays a dual role in activating genes associated with spore maturation and repressing certain development-associated genes. The complex binds DNA through the DNA-binding domain of vosA that recognizes an 11-nucleotide consensus sequence 5'-CTGGCCGCGGC-3' consisting of two motifs in the promoters of key developmental regulatory genes. Required for gall induction and teliospore formation on seedlings. This Mycosarcoma maydis (Corn smut fungus) protein is Spore development regulator umv1.